Here is a 161-residue protein sequence, read N- to C-terminus: Small ribosomal subunit protein uS9 (161 aa).

The protein belongs to the universal ribosomal protein uS9 family.

The protein is Small ribosomal subunit protein uS9 (rpsI) of Rickettsia prowazekii (strain Madrid E).